A 1008-amino-acid polypeptide reads, in one-letter code: SKI family transcriptional corepressor 2 (1008 aa).

Disordered regions lie at residues 280–315 (HLLGAPPPPPPPPPLAELAGAPHAHHKRPRFDDDDD) and 514–927 (EPGG…KKDV). 2 stretches are compositionally biased toward pro residues: residues 284–294 (APPPPPPPPPL) and 525–534 (APPPGQPPPV). Low complexity-rich tracts occupy residues 535–544 (VANGPGSGPP) and 578–595 (GVTSGTGSASSGAGSVGT). The span at 626–635 (GGKDDAESLA) shows a compositional bias: basic and acidic residues. Over residues 649–666 (PAHHHHHHHHPHHHHHHP) the composition is skewed to basic residues. The segment covering 691–703 (APPPPPPPPPLAP) has biased composition (pro residues). Acidic residues-rich tracts occupy residues 724–739 (DSSEDEEDEEEEQEVD) and 748–766 (GEEEEDGRDPEDEEEEDEE). The span at 787 to 797 (LSEKGSGRDRT) shows a compositional bias: basic and acidic residues. Over residues 842-855 (SSSGGSRPGSPVHH) the composition is skewed to low complexity. Basic and acidic residues-rich tracts occupy residues 856–872 (PSLEEEPSYKDNQKPKE), 880–890 (TKDDNFSDKNK), and 905–915 (FWRERSGEHTQ).

Belongs to the SKI family. In terms of assembly, interacts with SMAD2 and SMAD3. In terms of tissue distribution, expression is restricted to adult and embryonic central nervous system. Expressed at high levels in the developing cerebellum, ventral metencephalon and myelencephalon at 12.5 dpc (at protein level). In the adult cerebellum, expressed specifically in Purkinje cells.

Its subcellular location is the nucleus. The protein resides in the cytoplasm. Acts as a TGF-beta antagonist in the nervous system. Exhibits transcriptional repressor activity. The sequence is that of SKI family transcriptional corepressor 2 from Mus musculus (Mouse).